The chain runs to 138 residues: Putative pre-16S rRNA nuclease (138 aa).

Belongs to the YqgF nuclease family.

It localises to the cytoplasm. In terms of biological role, could be a nuclease involved in processing of the 5'-end of pre-16S rRNA. The chain is Putative pre-16S rRNA nuclease from Escherichia coli O157:H7.